The primary structure comprises 87 residues: NAD(P)H-quinone oxidoreductase subunit O (87 aa).

Residues 1–10 (MSEQTGKVDD) are compositionally biased toward basic and acidic residues. Positions 1-23 (MSEQTGKVDDSQSPPKVQKKLRK) are disordered.

This sequence belongs to the complex I NdhO subunit family. NDH-1 can be composed of about 15 different subunits; different subcomplexes with different compositions have been identified which probably have different functions.

The protein resides in the cellular thylakoid membrane. It catalyses the reaction a plastoquinone + NADH + (n+1) H(+)(in) = a plastoquinol + NAD(+) + n H(+)(out). The enzyme catalyses a plastoquinone + NADPH + (n+1) H(+)(in) = a plastoquinol + NADP(+) + n H(+)(out). Functionally, NDH-1 shuttles electrons from an unknown electron donor, via FMN and iron-sulfur (Fe-S) centers, to quinones in the respiratory and/or the photosynthetic chain. The immediate electron acceptor for the enzyme in this species is believed to be plastoquinone. Couples the redox reaction to proton translocation, and thus conserves the redox energy in a proton gradient. Cyanobacterial NDH-1 also plays a role in inorganic carbon-concentration. The protein is NAD(P)H-quinone oxidoreductase subunit O of Prochlorococcus marinus (strain NATL2A).